The sequence spans 161 residues: MSATDLSPTSLREAFGHFPSGVIAIAAEVDGTRVGLAASTFVPVSLEPPLVAFCVQNSSTTWPKLKDLPSLGISVLGEAHDTAARTLAAKTGDRFAGLETESRDSGAVFINGTSVWLESAIEQLVPAGDHTIVVLRVSDIVINEAVPPIVFHRSAFRKLGA.

FMN is bound by residues aspartate 30, 37 to 40 (AAST), 54 to 61 (CVQNSSTT), alanine 88, arginine 94, and phenylalanine 151.

It belongs to the non-flavoprotein flavin reductase family.

The protein localises to the cytoplasm. It carries out the reaction FMNH2 + NAD(+) = FMN + NADH + 2 H(+). The catalysed reaction is FADH2 + NAD(+) = FAD + NADH + 2 H(+). It participates in sulfur metabolism; dibenzothiophene degradation. In terms of biological role, an NADH:FMN oxidoreductase which supplies reduced FMN for the '4S' desulfurization pathway that removes covalently bound sulfur from dibenzothiophene (DBT) without breaking carbon-carbon bonds. Can also use FAD. Provides DszC and probably also DszA (DBT-monooxygenase and DBTO2-monooxygenase respectively) with reduced flavin (FMN and/or FAD). In Mycolicibacterium goodii (Mycobacterium goodii), this protein is NADH:FMN oxidoreductase.